Consider the following 749-residue polypeptide: Protein SWAP (749 aa).

The segment at 8 to 124 is dry CEEERYL; the sequence is SNVHVQEYKD…RNDQRNAIGF (117 aa). Positions 105 to 118 are enriched in basic and acidic residues; that stretch reads EQEKEEEEKRRNDQ. Residues 105-149 are disordered; the sequence is EQEKEEEEKRRNDQRNAIGFDYGTGKVKARESDSEDEPFEPPEGI. The SURP motif 1 repeat unit spans residues 166–209; the sequence is IIEKTASFIVANGTQMEIVIKAKQRNNAEQFGFLEFDHRLNPFY. The disordered stretch occupies residues 256–310; it reads HGSDSEDSDSDYELHPSLLSGGAKRPVTPEKPGAIGPRKKPVEPEKPPDFTLKPV. The SURP motif 2 repeat unit spans residues 391–431; that stretch reads ILNSYAEHVAQRGLEAEASLAAREDLQLHFMEPKSPYYSYY. Positions 458 to 478 are enriched in low complexity; sequence PAPPSAVSSPGPSSLMSLNLS. 3 disordered regions span residues 458–498, 537–592, and 608–749; these read PAPP…SSRL, LRND…QVDR, and KAKK…DRRR. A compositionally biased stretch (basic and acidic residues) spans 538–552; that stretch reads RNDEPRDESSFRFDP. A compositionally biased stretch (polar residues) spans 560–569; sequence PSDTTANFSD. Pro residues predominate over residues 574-583; sequence FPPPTPPVIP. 2 stretches are compositionally biased toward basic and acidic residues: residues 608–659 and 679–689; these read KAKK…RSLD and EEMKRTDEDRE. 2 stretches are compositionally biased toward basic residues: residues 690–704 and 714–749; these read RKRHRKRSRSRRRSR and EHKKSRKSGRHHRSRSRSSSRDRHRRNRSRSRDRRR.

Functionally, it is a regulator of pre-mRNA splicing (and, possibly, of other RNA processing events). It may regulate its own expression at the level of RNA processing. The chain is Protein SWAP (swp-1) from Caenorhabditis elegans.